We begin with the raw amino-acid sequence, 153 residues long: UPF0540 protein At1g62220 (153 aa).

The N-terminal stretch at 1-21 (MNATKFVVLLVISVLCAIVTA) is a signal peptide. 2 disordered regions span residues 63 to 82 (SSATGFNNPKGPDANAYENG) and 122 to 153 (ARANGKVASASRVKGSSEKKKGKGKKGKGKKD). Residues 122–132 (ARANGKVASAS) are compositionally biased toward low complexity. Residues 141-153 (KKGKGKKGKGKKD) show a composition bias toward basic residues.

Belongs to the UPF0540 family.

The chain is UPF0540 protein At1g62220 from Arabidopsis thaliana (Mouse-ear cress).